Consider the following 252-residue polypeptide: Imidazole glycerol phosphate synthase subunit HisF (252 aa).

Active-site residues include Asp11 and Asp130.

This sequence belongs to the HisA/HisF family. In terms of assembly, heterodimer of HisH and HisF.

The protein localises to the cytoplasm. It carries out the reaction 5-[(5-phospho-1-deoxy-D-ribulos-1-ylimino)methylamino]-1-(5-phospho-beta-D-ribosyl)imidazole-4-carboxamide + L-glutamine = D-erythro-1-(imidazol-4-yl)glycerol 3-phosphate + 5-amino-1-(5-phospho-beta-D-ribosyl)imidazole-4-carboxamide + L-glutamate + H(+). It participates in amino-acid biosynthesis; L-histidine biosynthesis; L-histidine from 5-phospho-alpha-D-ribose 1-diphosphate: step 5/9. Functionally, IGPS catalyzes the conversion of PRFAR and glutamine to IGP, AICAR and glutamate. The HisF subunit catalyzes the cyclization activity that produces IGP and AICAR from PRFAR using the ammonia provided by the HisH subunit. In Staphylococcus epidermidis (strain ATCC 12228 / FDA PCI 1200), this protein is Imidazole glycerol phosphate synthase subunit HisF.